The sequence spans 407 residues: Carbamoyl phosphate synthase small chain (407 aa).

A CPSase region spans residues 1–205 (MTETTSKTAP…LADGYGEQDT (205 aa)). L-glutamine is bound by residues Ser60, Gly257, and Gly259. The region spanning 209–397 (HVVALDFGVK…INLIREKKGE (189 aa)) is the Glutamine amidotransferase type-1 domain. Catalysis depends on Cys286, which acts as the Nucleophile. The L-glutamine site is built by Leu287, Gln290, Asn328, Gly330, and Phe331. Residues His370 and Glu372 contribute to the active site.

This sequence belongs to the CarA family. Composed of two chains; the small (or glutamine) chain promotes the hydrolysis of glutamine to ammonia, which is used by the large (or ammonia) chain to synthesize carbamoyl phosphate. Tetramer of heterodimers (alpha,beta)4.

It carries out the reaction hydrogencarbonate + L-glutamine + 2 ATP + H2O = carbamoyl phosphate + L-glutamate + 2 ADP + phosphate + 2 H(+). The enzyme catalyses L-glutamine + H2O = L-glutamate + NH4(+). The protein operates within amino-acid biosynthesis; L-arginine biosynthesis; carbamoyl phosphate from bicarbonate: step 1/1. It participates in pyrimidine metabolism; UMP biosynthesis via de novo pathway; (S)-dihydroorotate from bicarbonate: step 1/3. Its function is as follows. Small subunit of the glutamine-dependent carbamoyl phosphate synthetase (CPSase). CPSase catalyzes the formation of carbamoyl phosphate from the ammonia moiety of glutamine, carbonate, and phosphate donated by ATP, constituting the first step of 2 biosynthetic pathways, one leading to arginine and/or urea and the other to pyrimidine nucleotides. The small subunit (glutamine amidotransferase) binds and cleaves glutamine to supply the large subunit with the substrate ammonia. The chain is Carbamoyl phosphate synthase small chain from Brucella anthropi (strain ATCC 49188 / DSM 6882 / CCUG 24695 / JCM 21032 / LMG 3331 / NBRC 15819 / NCTC 12168 / Alc 37) (Ochrobactrum anthropi).